We begin with the raw amino-acid sequence, 356 residues long: Protein RecA (356 aa).

Residue 68–75 (GPESSGKT) coordinates ATP.

It belongs to the RecA family.

The protein localises to the cytoplasm. In terms of biological role, can catalyze the hydrolysis of ATP in the presence of single-stranded DNA, the ATP-dependent uptake of single-stranded DNA by duplex DNA, and the ATP-dependent hybridization of homologous single-stranded DNAs. It interacts with LexA causing its activation and leading to its autocatalytic cleavage. This chain is Protein RecA, found in Clostridium botulinum (strain Eklund 17B / Type B).